The primary structure comprises 654 residues: Probable protein phosphatase 2C 23 (654 aa).

The disordered stretch occupies residues 11-30 (CLTGGAGRNKKPELSILEPD). Ser-147 bears the Phosphoserine mark. One can recognise a PPM-type phosphatase domain in the interval 243–645 (DVSLESQNLQ…DDVSIVVISL (403 aa)). Asp-280 and Gly-281 together coordinate Mn(2+). The segment at 309-336 (DDPKTDAKSSDEADVENRDSSSEKKSKN) is disordered. Residues Asp-573 and Asp-636 each coordinate Mn(2+).

This sequence belongs to the PP2C family. Requires Mg(2+) as cofactor. Mn(2+) is required as a cofactor. Expressed in seedlings, roots, leaves, stems, young inflorescences, flowers and siliques.

It is found in the nucleus. It catalyses the reaction O-phospho-L-seryl-[protein] + H2O = L-seryl-[protein] + phosphate. It carries out the reaction O-phospho-L-threonyl-[protein] + H2O = L-threonyl-[protein] + phosphate. Its function is as follows. Involved in leaf development regulation. The protein is Probable protein phosphatase 2C 23 (PLL4) of Arabidopsis thaliana (Mouse-ear cress).